Here is a 198-residue protein sequence, read N- to C-terminus: Large ribosomal subunit protein bL9 (198 aa).

This sequence belongs to the bacterial ribosomal protein bL9 family.

In terms of biological role, binds to the 23S rRNA. This chain is Large ribosomal subunit protein bL9, found in Bartonella tribocorum (strain CIP 105476 / IBS 506).